The sequence spans 386 residues: MNIHEYQAKHILSRFGVSVPKGAIVHSLSEVDDAISKLHSKVIVVKAQIHAGGRGKAGGVVVCRTSDEAKASIKNMLGSTLVTHQTSKDGQKVRKVYLEEGCDIKKEYYISAIVNRKQSQVSIIFSTEGGVDIEEVASTSPEKVIVCNIDPLFGFQSFHGRNLCFDSNLSLDQTRKISDIAEKIYKVMLSTDANQVEINPLVETSSGNFIALDAKINFDDNALYRHPDIQELRDYDEEIKEEIEASKYGLNYIKMDGNIGCMVNGAGLAMATMDIIKYYGAEPANFLDVGGGASQKTVTEAFKIILSDKVDGILVNIFGGIMRCDIIANGIIAAIEEIRINVPLVVRLSGTNFELGKKLLDDSSLNIITANDLSEAAYNIVNIVKK.

In terms of domain architecture, ATP-grasp spans 9 to 244; that stretch reads KHILSRFGVS…YDEEIKEEIE (236 aa). ATP-binding positions include lysine 46, 53–55, glutamate 99, cysteine 102, and glutamate 107; that span reads GRG. Residues asparagine 199 and aspartate 213 each coordinate Mg(2+). Substrate contacts are provided by residues asparagine 264 and 320-322; that span reads GIM.

The protein belongs to the succinate/malate CoA ligase beta subunit family. As to quaternary structure, heterotetramer of two alpha and two beta subunits. The cofactor is Mg(2+).

It catalyses the reaction succinate + ATP + CoA = succinyl-CoA + ADP + phosphate. It carries out the reaction GTP + succinate + CoA = succinyl-CoA + GDP + phosphate. It functions in the pathway carbohydrate metabolism; tricarboxylic acid cycle; succinate from succinyl-CoA (ligase route): step 1/1. In terms of biological role, succinyl-CoA synthetase functions in the citric acid cycle (TCA), coupling the hydrolysis of succinyl-CoA to the synthesis of either ATP or GTP and thus represents the only step of substrate-level phosphorylation in the TCA. The beta subunit provides nucleotide specificity of the enzyme and binds the substrate succinate, while the binding sites for coenzyme A and phosphate are found in the alpha subunit. The sequence is that of Succinate--CoA ligase [ADP-forming] subunit beta from Ehrlichia canis (strain Jake).